The following is a 1604-amino-acid chain: Collagen alpha-1(XVI) chain (1604 aa).

An N-terminal signal peptide occupies residues 1–21 (MWVSWAPGLWLLGLWATFGHG). An N-linked (GlcNAc...) asparagine glycan is attached at N47. Residues 50 to 231 (GFNLIHRLSL…LQQVHIYCDP (182 aa)) enclose the Laminin G-like domain. The interval 232–374 (ELVLEEGCCE…SPDAPLQCAE (143 aa)) is nonhelical region 10 (NC10). Residues 301–311 (AERGAKVHQET) show a composition bias toward basic and acidic residues. Positions 301-509 (AERGAKVHQE…KGEKGDPCEV (209 aa)) are disordered. The N-linked (GlcNAc...) asparagine glycan is linked to N327. The region spanning 375–423 (GPKGEKGESGALGPSGLPGSTGEKGQKGEKGDGGIKGVPGKPGRDGRPG) is the Collagen-like 1 domain. The interval 375 to 506 (GPKGEKGESG…PGVKGEKGDP (132 aa)) is triple-helical region 9 (COL9) with 3 imperfections. Residues 383–397 (SGALGPSGLPGSTGE) are compositionally biased toward low complexity. Basic and acidic residues predominate over residues 398-407 (KGQKGEKGDG). Pro residues predominate over residues 449–460 (PGPPGLPGPPGI). Positions 486 to 495 (GKEGPGGKPG) are enriched in gly residues. Residues 507–521 (CEVCPTLPEGFQNFV) form a nonhelical region 9 (NC9) region. The tract at residues 522–555 (GLPGKPGPKGEPGDPVPARGDPGIQGIKGEKGEP) is triple-helical region 8 (COL8) with 1 imperfection. A Cell attachment site motif is present at residues 540–542 (RGD). The interval 556–572 (CLSCSSVVGAQHLVSST) is nonhelical region 8 (NC8). Residues 573–631 (GASGDVGSPGFGLPGLPGRAGVPGLKGEKGNFGEAGPAGSPGPPGPVGPAGIKGAKGEP) are triple-helical region 7 (COL7) with 1 imperfection. 2 Collagen-like domains span residues 573–633 (GASG…EPCE) and 667–721 (GLPG…GEKG). Residues 604–917 (FGEAGPAGSP…PPGIPGPPGP (314 aa)) are disordered. The nonhelical region 7 (NC7) stretch occupies residues 632 to 652 (CEPCPALSNLQDGDVRVVALP). A triple-helical region 6 (COL6) with 1 imperfection region spans residues 653–723 (GPSGEKGEPG…AGPKGEKGDG (71 aa)). The span at 674–684 (KAGERGLKGQK) shows a compositional bias: basic and acidic residues. A compositionally biased stretch (low complexity) spans 686-702 (DAGNPGDPGTPGTTGRP). The tract at residues 724-738 (CTACPSLQGTVTDMA) is nonhelical region 6 (NC6). The triple-helical region 5 (COL5) with 3 imperfections stretch occupies residues 739–876 (GRPGQPGPKG…RGEKGEPGEC (138 aa)). Low complexity-rich tracts occupy residues 766–781 (LPGV…VQGE), 792–808 (PQGE…QGLP), and 826–846 (PGVK…SGPP). Residues 788-840 (GVQGPQGEPGAPGLPGIQGLPGPRGPPGPTGEKGAQGSPGVKGATGPVGPPGA) enclose the Collagen-like 4 domain. Residues 864–873 (KGPRGEKGEP) are compositionally biased toward basic and acidic residues. The segment at 877–887 (SCPSQGDLIFS) is nonhelical region 5 (NC5). The Collagen-like 5 domain maps to 888–938 (GMPGAPGLWMGSSWQPGPQGPPGIPGPPGPPGVPGLQGVPGNNGLPGQPGL). Residues 888–939 (GMPGAPGLWMGSSWQPGPQGPPGIPGPPGPPGVPGLQGVPGNNGLPGQPGLT) form a triple-helical region 4 (COL4) with 2 imperfections region. The segment covering 905–917 (PQGPPGIPGPPGP) has biased composition (pro residues). The segment at 940–973 (AELGSLPIEQHLLKSICGDCVQGQRAHPGYLVEK) is nonhelical region 4 (NC4). Residues 974-988 (GEKGDQGIPGVPGLD) are triple-helical region 3 (COL3). Positions 989 to 1011 (NCAQCFLSLERPRAEEARGDNSE) are nonhelical region 3 (NC3). 2 disordered regions span residues 1001-1429 (RAEE…VPGS) and 1468-1517 (MAAA…PGTK). The Cell attachment site signature appears at 1006 to 1008 (RGD). Residues 1012–1433 (GDPGCVGSPG…PGVPGSMGDM (422 aa)) form a triple-helical region 2 (COL2) with 2 imperfections region. Residues 1018-1075 (GSPGLPGPPGLPGQRGEEGPPGMRGSPGPPGPIGPPGFPGAVGSPGLPGLQGERGLTG) form the Collagen-like 6 domain. Composition is skewed to pro residues over residues 1044–1055 (PGPPGPIGPPGF), 1160–1169 (FPGPPGPPGF), and 1199–1208 (SPGPPGPPGI). Basic and acidic residues predominate over residues 1217–1226 (LDGKDGKPGL). Residues 1227-1229 (RGD) carry the Cell attachment site motif. A compositionally biased stretch (low complexity) spans 1271–1284 (RPGAEGEPGAMGPQ). Composition is skewed to pro residues over residues 1286-1302 (RPGP…PGQP) and 1330-1342 (QPGP…PPGE). Residues 1369–1378 (DPGAAGQKGQ) show a composition bias toward low complexity. Positions 1386–1395 (GMPGGPGKSG) are enriched in gly residues. The segment covering 1420 to 1429 (SPGLPGVPGS) has biased composition (low complexity). The interval 1434–1472 (VNYDEIKRFIRQEIIKMFDERMAYYTSRMQFPMEMAAAP) is nonhelical region 2 (NC2). 2 consecutive Collagen-like domains span residues 1472-1524 (PGRP…GDIG) and 1528-1576 (AGEN…GKAG). The segment at 1473–1578 (GRPGPPGKDG…MGQPGKAGHC (106 aa)) is triple-helical region 1 (COL1) with 2 imperfections. Residues 1579-1604 (NPSDCFGAMPMEQQYPPMKTMKGPFG) form a nonhelical region 1 (NC1) region.

The protein belongs to the fibril-associated collagens with interrupted helices (FACIT) family. In terms of assembly, homotrimer. Interacts with FBN1, fibronectin and integrins ITGA1/ITGB1 and ITGA2/ITGB1. Integrin ITGA1/ITGB1 binds to a unique site within COL16A1 located close to its C-terminal end between collagenous domains COL1-COL3. In terms of processing, prolines at the third position of the tripeptide repeating unit (G-X-Y) are hydroxylated in some or all of the chains. Glycosylated. In papillary dermis, is a component of specialized fibrillin-1-containing microfibrils, whereas in territorial cartilage matrix, it is localized to a discrete population of thin, weakly banded collagen fibrils in association with other collagens (at protein level). In the placenta, where it is found in the amnion, a membranous tissue lining the amniotic cavity. Within the amnion, it is found in an acellular, relatively dense layer of a complex network of reticular fibers. Also located to a fibroblast layer beneath this dense layer. Exists in tissues in association with other types of collagen.

It is found in the secreted. Its subcellular location is the extracellular space. It localises to the extracellular matrix. Involved in mediating cell attachment and inducing integrin-mediated cellular reactions, such as cell spreading and alterations in cell morphology. In Homo sapiens (Human), this protein is Collagen alpha-1(XVI) chain (COL16A1).